A 909-amino-acid polypeptide reads, in one-letter code: MPSLPNESDHQATCSLSLHSDLPYQPSSSIKRKVRKKKKNGAITANVVGTKYEIVRLVTEEMMFTKARDDDETANLIWNDCAVQHEKIAELRNYQRINHFPGMGEICRKDCLARNMTKMIKCQPHEYNFIPRTWIFPAEYTQFQTYIKELKKKRRQKTFIIKPANGAMGHGISLTRNGEKLQAQDHLIVQEYLEKPFLLESYKFDLRIYILVTSCDPLRIFLYNDGLVRMGTEKYHPPSESNLSQLYMHLTNYSVNKHNENFERDETENRGSKRSIKWFTEFLRANDYDISKFWNDISDLVVKTLIVAEPHVLHAYRMCRPGQHPTSESVCFEVLGFDIILDRKLKPWLLEINRAPSFGTDQKIDHDVKKGVLLNALKLLNIRASDKKKNLAKQKAEAQKRLYGQGSMKRLSPASSDWEKQRHTLERRKEELKERLAQVRKQISREEYENRHLGNYRRIYPPEDKLLLEKYEGLLATAFQTFLAGRAASLQREMNNPLKRMKEEDILDLLEQCELDDEKLSGKPTRPKEPRTLSSMPESTQTLKKLKNYSSHSSSNSTGSSSDTEEEEDEKEGKEKKVSYDLEEHKYKSLERSSRIHWKPPLKAARPFSNSSSPSSAASMRRSVSCPRSITALNTQSPTTDQRPFSSRISSTITRPLSGNRTNSLNRSSSSNRVPQSGTSGSVYPSISESRLDHLTKEQEEELTKQTLYALRDMRIRIPGKGVEEITHSHIDEIMDNWTYHKSKVASYWLIKLDSVKQRKVLDIVRTNIRSVLQRIWKVSDVECLHIYRSFNRVFNRLLWNHGQGLWSCFSNSGTSWETIFCKSTEVVTPQQFQCCQRLVQLCKDCLLAVYKYATDSRVAGMSPDWDDSRYLFPVVPQFTMKSSSSGVNCSSSRLPRSSILFNPRHNHY.

The TTL domain occupies 40–392 (NGAITANVVG…RASDKKKNLA (353 aa)). ATP is bound by residues lysine 162, 168–169 (MG), 190–193 (QEYL), and 203–205 (KFD). Arginine 229 serves as a coordination point for L-glutamate. ATP is bound at residue 251-252 (TN). Positions 253, 254, and 273 each coordinate L-glutamate. The Mg(2+) site is built by aspartate 338, glutamate 351, and asparagine 353. Lysine 369 lines the L-glutamate pocket. Residues 390-452 (NLAKQKAEAQ…ISREEYENRH (63 aa)) are c-MTBD region. Disordered regions lie at residues 517-580 (DEKL…KVSY) and 603-688 (KAAR…PSIS). The span at 518-531 (EKLSGKPTRPKEPR) shows a compositional bias: basic and acidic residues. A compositionally biased stretch (polar residues) spans 532–542 (TLSSMPESTQT). Low complexity predominate over residues 548 to 562 (NYSSHSSSNSTGSSS). Residues 571-580 (KEGKEKKVSY) show a composition bias toward basic and acidic residues. The span at 604–625 (AARPFSNSSSPSSAASMRRSVS) shows a compositional bias: low complexity. Polar residues predominate over residues 626 to 657 (CPRSITALNTQSPTTDQRPFSSRISSTITRPL). The span at 658–673 (SGNRTNSLNRSSSSNR) shows a compositional bias: low complexity. Positions 674 to 688 (VPQSGTSGSVYPSIS) are enriched in polar residues.

The protein belongs to the tubulin--tyrosine ligase family. In terms of assembly, interacts with both alpha- and beta-tubulin (via C-terminal tubulin tails). Requires Mg(2+) as cofactor.

It localises to the cell projection. Its subcellular location is the cilium. The protein resides in the cytoplasm. It is found in the cytoskeleton. The protein localises to the cilium basal body. It localises to the dendrite. Its subcellular location is the perikaryon. The catalysed reaction is L-glutamyl-[protein] + L-glutamate + ATP = gamma-L-glutamyl-L-glutamyl-[protein] + ADP + phosphate + H(+). It catalyses the reaction (L-glutamyl)(n)-gamma-L-glutamyl-L-glutamyl-[protein] + L-glutamate + ATP = (L-glutamyl)(n+1)-gamma-L-glutamyl-L-glutamyl-[protein] + ADP + phosphate + H(+). In terms of biological role, polyglutamylase which modifies tubulin, generating polyglutamate side chains of variable lengths on the gamma-carboxyl group of specific glutamate residues within the C-terminal tail of tubulin. Mediates both ATP-dependent initiation and elongation steps of the polyglutamylation reaction. Preferentially modifies the beta-tubulin tail over an alpha-tail. Competes with monoglycylase TTLL3 for modification site on beta-tubulin substrate, thereby creating an anticorrelation between glycylation and glutamylation reactions. This is Tubulin polyglutamylase TTLL7 from Xenopus tropicalis (Western clawed frog).